A 279-amino-acid chain; its full sequence is Succinate dehydrogenase [ubiquinone] iron-sulfur subunit 1, mitochondrial (279 aa).

Residues 1–28 (MASGLIGRLVGTKPSKLATAARLIPARW) constitute a mitochondrion transit peptide. One can recognise a 2Fe-2S ferredoxin-type domain in the interval 52 to 141 (FQIYRWNPDN…ETTITPLPHM (90 aa)). Residues Cys102, Cys107, and Cys122 each coordinate [2Fe-2S] cluster. The region spanning 184–214 (DRAKLDGMYECILCACCSTSCPSYWWNPESY) is the 4Fe-4S ferredoxin-type domain. Cys194, Cys197, and Cys200 together coordinate [4Fe-4S] cluster. Position 204 (Cys204) interacts with [3Fe-4S] cluster. Trp209 is an a ubiquinone binding site. [3Fe-4S] cluster-binding residues include Cys251 and Cys257. Cys261 contacts [4Fe-4S] cluster.

The protein belongs to the succinate dehydrogenase/fumarate reductase iron-sulfur protein family. In terms of assembly, component of complex II composed of eight subunits in plants: four classical SDH subunits SDH1, SDH2, SDH3 and SDH4 (a flavoprotein (FP), an iron-sulfur protein (IP), and a cytochrome b composed of a large and a small subunit.), as well as four subunits unknown in mitochondria from bacteria and heterotrophic eukaryotes. [2Fe-2S] cluster is required as a cofactor. It depends on [3Fe-4S] cluster as a cofactor. The cofactor is [4Fe-4S] cluster. In terms of tissue distribution, ubiquitous. Preferentially expressed in flowers and inflorescences.

It localises to the mitochondrion inner membrane. The enzyme catalyses a quinone + succinate = fumarate + a quinol. It functions in the pathway carbohydrate metabolism; tricarboxylic acid cycle; fumarate from succinate (eukaryal route): step 1/1. Its function is as follows. Iron-sulfur protein (IP) subunit of succinate dehydrogenase (SDH) that is involved in complex II of the mitochondrial electron transport chain and is responsible for transferring electrons from succinate to ubiquinone (coenzyme Q). This chain is Succinate dehydrogenase [ubiquinone] iron-sulfur subunit 1, mitochondrial (SDH2-1), found in Arabidopsis thaliana (Mouse-ear cress).